Reading from the N-terminus, the 520-residue chain is MSSAPDLALTARLVQLLQTGNIFTTILSIFGIALSAVAAWGIATCVYNLYFHPLASYPGPFLWRASSLPWKIALLKGTMHHDLMRFHETYGPELRLKPDELSYANAQAWKDIHAHVPGRPEFLKDPIRLPLAPNGVMSILVSDTKNHARFRSLFGHAFSDKGLRTQQKTINTYADQFMEVLKEVADNGKSVEMVNYYNMAVFDTIGALAFGESFNSMRDRKIHPWVDAIHKNLKSVAISHVMRSMGIEPLTPYILPKELRGARANNYSYAIAKINNRMQKTGEQGDFWDRVIVKSGAEGEMNDGSGMSKGEMLNNAAVMVVGGSETSASALCGATYLLAQSPDKMKKAVGEIRGKFKSSDEITLHSVTNMEYLTAVIDETLRMYPSVPGQPPRVVPKGGATVCGKFVPEETRVGVSHIGTYFASYNFTRSHEFIPERHIDKSLFPDDNYAAYQPWSVGVRNCIGKNLAYAELRLILAKTLWHYDITLDREKTGDFLDQKIWSIWAKRELWMKISLAENAK.

The helical transmembrane segment at 22 to 42 (IFTTILSIFGIALSAVAAWGI) threads the bilayer. Residues asparagine 266 and asparagine 426 are each glycosylated (N-linked (GlcNAc...) asparagine). Cysteine 462 provides a ligand contact to heme.

The protein belongs to the cytochrome P450 family. Heme is required as a cofactor.

The protein localises to the membrane. The catalysed reaction is versicolorin B + NADPH + O2 + H(+) = versicolorin A + NADP(+) + 2 H2O. It participates in mycotoxin biosynthesis. In terms of biological role, versicolorin B desaturase; part of the fragmented gene cluster that mediates the biosynthesis of dothistromin (DOTH), a polyketide toxin very similar in structure to the aflatoxin precursor, versicolorin B. The first step of the pathway is the conversion of acetate to norsolorinic acid (NOR) and requires the fatty acid synthase subunits hexA and hexB, as well as the polyketide synthase pksA. PksA combines a hexanoyl starter unit and 7 malonyl-CoA extender units to synthesize the precursor NOR. The hexanoyl starter unit is provided to the acyl-carrier protein (ACP) domain by the fungal fatty acid synthase hexA/hexB. The second step is the conversion of NOR to averantin (AVN) and requires the norsolorinic acid ketoreductase nor1, which catalyzes the dehydration of norsolorinic acid to form (1'S)-averantin. The cytochrome P450 monooxygenase avnA then catalyzes the hydroxylation of AVN to 5'hydroxyaverantin (HAVN). The next step is performed by adhA that transforms HAVN to averufin (AVF). Averufin might then be converted to hydroxyversicolorone by cypX and avfA. Hydroxyversicolorone is further converted versiconal hemiacetal acetate (VHA) by moxY. VHA is then the substrate for the versiconal hemiacetal acetate esterase est1 to yield versiconal (VAL). Versicolorin B synthase vbsA then converts VAL to versicolorin B (VERB) by closing the bisfuran ring. Then, the activity of the versicolorin B desaturase verB leads to versicolorin A (VERA). DotB, a predicted chloroperoxidase, may perform epoxidation of the A-ring of VERA. Alternatively, a cytochrome P450, such as cypX or avnA could catalyze this step. It is also possible that another, uncharacterized, cytochrome P450 enzyme is responsible for this step. Opening of the epoxide could potentially be achieved by the epoxide hydrolase epoA. However, epoA seems not to be required for DOTH biosynthesis, but other epoxide hydrolases may have the ability to complement this hydrolysis. Alternatively, opening of the epoxide ring could be achieved non-enzymatically. The next step is the deoxygenation of ring A to yield the 5,8-dihydroxyanthraquinone which is most likely catalyzed by the NADPH dehydrogenase encoded by ver1. The last stages of DOTH biosynthesis are proposed to involve hydroxylation of the bisfuran. OrdB and norB might have oxidative roles here. An alternative possibility is that cytochrome P450 monoogenases such as avnA and cypX might perform these steps in addition to previously proposed steps. The sequence is that of Versicolorin B desaturase from Dothistroma septosporum (strain NZE10 / CBS 128990) (Red band needle blight fungus).